A 545-amino-acid polypeptide reads, in one-letter code: CTP synthase (545 aa).

Positions 1-265 are amidoligase domain; sequence MTKYIFITGG…DEIVVKKLSL (265 aa). Ser13 contacts CTP. Ser13 contacts UTP. ATP contacts are provided by residues 14–19 and Asp71; that span reads SLGKGI. Residues Asp71 and Glu139 each coordinate Mg(2+). Residues 146 to 148, 186 to 191, and Lys222 contribute to the CTP site; these read DIE and KTKPTQ. UTP-binding positions include 186 to 191 and Lys222; that span reads KTKPTQ. The Glutamine amidotransferase type-1 domain maps to 290–541; that stretch reads KIAMVGKYTE…VLAARIHHQE (252 aa). Gly351 serves as a coordination point for L-glutamine. Cys378 (nucleophile; for glutamine hydrolysis) is an active-site residue. Residues 379–382, Glu402, and Arg469 contribute to the L-glutamine site; that span reads LGMQ. Catalysis depends on residues His514 and Glu516.

Belongs to the CTP synthase family. Homotetramer.

It catalyses the reaction UTP + L-glutamine + ATP + H2O = CTP + L-glutamate + ADP + phosphate + 2 H(+). The enzyme catalyses L-glutamine + H2O = L-glutamate + NH4(+). The catalysed reaction is UTP + NH4(+) + ATP = CTP + ADP + phosphate + 2 H(+). Its pathway is pyrimidine metabolism; CTP biosynthesis via de novo pathway; CTP from UDP: step 2/2. With respect to regulation, allosterically activated by GTP, when glutamine is the substrate; GTP has no effect on the reaction when ammonia is the substrate. The allosteric effector GTP functions by stabilizing the protein conformation that binds the tetrahedral intermediate(s) formed during glutamine hydrolysis. Inhibited by the product CTP, via allosteric rather than competitive inhibition. Catalyzes the ATP-dependent amination of UTP to CTP with either L-glutamine or ammonia as the source of nitrogen. Regulates intracellular CTP levels through interactions with the four ribonucleotide triphosphates. In Legionella pneumophila (strain Corby), this protein is CTP synthase.